The following is a 109-amino-acid chain: Large ribosomal subunit protein uL24 (109 aa).

Belongs to the universal ribosomal protein uL24 family. In terms of assembly, part of the 50S ribosomal subunit.

In terms of biological role, one of two assembly initiator proteins, it binds directly to the 5'-end of the 23S rRNA, where it nucleates assembly of the 50S subunit. One of the proteins that surrounds the polypeptide exit tunnel on the outside of the subunit. The chain is Large ribosomal subunit protein uL24 from Geotalea uraniireducens (strain Rf4) (Geobacter uraniireducens).